Consider the following 185-residue polypeptide: Potassium-transporting ATPase KdpC subunit (185 aa).

The helical transmembrane segment at 14 to 34 (ALSLLTGVAYPLALTGIAAVI) threads the bilayer.

This sequence belongs to the KdpC family. As to quaternary structure, the system is composed of three essential subunits: KdpA, KdpB and KdpC.

It localises to the cell inner membrane. Its function is as follows. Part of the high-affinity ATP-driven potassium transport (or Kdp) system, which catalyzes the hydrolysis of ATP coupled with the electrogenic transport of potassium into the cytoplasm. This subunit acts as a catalytic chaperone that increases the ATP-binding affinity of the ATP-hydrolyzing subunit KdpB by the formation of a transient KdpB/KdpC/ATP ternary complex. The polypeptide is Potassium-transporting ATPase KdpC subunit (Cereibacter sphaeroides (strain ATCC 17023 / DSM 158 / JCM 6121 / CCUG 31486 / LMG 2827 / NBRC 12203 / NCIMB 8253 / ATH 2.4.1.) (Rhodobacter sphaeroides)).